Here is a 92-residue protein sequence, read N- to C-terminus: Envelope glycoprotein J (92 aa).

The first 22 residues, 1 to 22, serve as a signal peptide directing secretion; the sequence is MDRYAVRTWGIVGILGCAAVGA. The Extracellular portion of the chain corresponds to 23-49; the sequence is APTGPASDTTNATARLPTHPPLIRSGG. An N-linked (GlcNAc...) asparagine; by host glycan is attached at asparagine 33. A helical transmembrane segment spans residues 50 to 70; the sequence is FAVPLIVGGLCLMILGMACLL. Residues 71–92 lie on the Cytoplasmic side of the membrane; it reads EVLRRLGRELARCCPHAGQFAP.

It belongs to the alphaherpesvirinae glycoprotein J family.

It localises to the host Golgi apparatus membrane. It is found in the host endoplasmic reticulum membrane. Its subcellular location is the host endosome membrane. Functions as an activator of viral protein expression and virus production. In turn, promotes cell-to-cell spread as well as syncytia formation. The sequence is that of Envelope glycoprotein J (gJ) from Homo sapiens (Human).